The sequence spans 251 residues: Carbohydrate deacetylase (251 aa).

Mg(2+) contacts are provided by His-59 and His-122.

The protein belongs to the YdjC deacetylase family. In terms of assembly, homodimer. It depends on Mg(2+) as a cofactor.

In terms of biological role, probably catalyzes the deacetylation of acetylated carbohydrates an important step in the degradation of oligosaccharides. In Vibrio parahaemolyticus serotype O3:K6 (strain RIMD 2210633), this protein is Carbohydrate deacetylase.